The sequence spans 513 residues: ATP synthase subunit alpha (513 aa).

169–176 lines the ATP pocket; it reads GDRQIGKT.

Belongs to the ATPase alpha/beta chains family. As to quaternary structure, F-type ATPases have 2 components, CF(1) - the catalytic core - and CF(0) - the membrane proton channel. CF(1) has five subunits: alpha(3), beta(3), gamma(1), delta(1), epsilon(1). CF(0) has three main subunits: a(1), b(2) and c(9-12). The alpha and beta chains form an alternating ring which encloses part of the gamma chain. CF(1) is attached to CF(0) by a central stalk formed by the gamma and epsilon chains, while a peripheral stalk is formed by the delta and b chains.

The protein localises to the cell inner membrane. It catalyses the reaction ATP + H2O + 4 H(+)(in) = ADP + phosphate + 5 H(+)(out). Produces ATP from ADP in the presence of a proton gradient across the membrane. The alpha chain is a regulatory subunit. The polypeptide is ATP synthase subunit alpha (Shewanella halifaxensis (strain HAW-EB4)).